The chain runs to 377 residues: 5-hydroxytryptamine receptor 1D (377 aa).

Residues Asn-5, Asn-17, and Asn-21 are each glycosylated (N-linked (GlcNAc...) asparagine). The next 3 helical transmembrane spans lie at 39–64 (ISLA…TTIF), 76–97 (LIGS…ISIA), and 110–134 (LCDI…VIAL). A disulfide bridge links Cys-111 with Cys-188. Residues Asp-118 and Cys-122 each contribute to the serotonin site. The DRY motif; important for ligand-induced conformation changes signature appears at 135–137 (DRY). 4 consecutive transmembrane segments (helical) span residues 155–176 (AAVM…PLFW), 195–218 (ISYT…ILYG), 301–326 (KTLG…VLPI), and 336–359 (ALFD…YTVF). Residue Ser-321 participates in serotonin binding. The NPxxY motif; important for ligand-induced conformation changes and signaling signature appears at 352 to 356 (NPIIY).

Belongs to the G-protein coupled receptor 1 family. As to quaternary structure, homodimer. Heterodimer with HTR1B.

It is found in the cell membrane. Functionally, G-protein coupled receptor for 5-hydroxytryptamine (serotonin). Also functions as a receptor for ergot alkaloid derivatives, various anxiolytic and antidepressant drugs and other psychoactive substances. Ligand binding causes a conformation change that triggers signaling via guanine nucleotide-binding proteins (G proteins) and modulates the activity of downstream effectors, such as adenylate cyclase. HTR1D is coupled to G(i)/G(o) G alpha proteins and mediates inhibitory neurotransmission by inhibiting adenylate cyclase activity. Regulates the release of 5-hydroxytryptamine in the brain, and thereby affects neural activity. May also play a role in regulating the release of other neurotransmitters. May play a role in vasoconstriction. The polypeptide is 5-hydroxytryptamine receptor 1D (HTR1D) (Canis lupus familiaris (Dog)).